Here is a 244-residue protein sequence, read N- to C-terminus: Derlin-2.1 (244 aa).

The Cytoplasmic portion of the chain corresponds to 1 to 21; the sequence is MAQAVEEWYKQMPIITRSYLT. A helical membrane pass occupies residues 22 to 42; it reads AAVVTTVGCSLEIISPYNLYL. At 43 to 96 the chain is on the lumenal side; that stretch reads NPTLVVKQYQFWRLVTNFLYFRKMDLDFLFHMFFLARYCKLLEENSFRGKTADF. A helical membrane pass occupies residues 97-117; sequence LYMLLFGATVLTGIVLIGGMI. Residues 118-121 lie on the Cytoplasmic side of the membrane; it reads PYLS. Residues 122-142 form a helical membrane-spanning segment; the sequence is VSFSKIIFLSNSLTFMMVYVW. Topologically, residues 143–152 are lumenal; sequence SKQNPYIHMS. A helical membrane pass occupies residues 153 to 173; it reads FLGLFTFTAAYLPWVLLGFSI. Residues 174–244 lie on the Cytoplasmic side of the membrane; it reads LVGASAWGDF…HAPFDEIHQD (71 aa).

The protein belongs to the derlin family.

The protein resides in the endoplasmic reticulum membrane. Functionally, may be involved in the degradation process of specific misfolded endoplasmic reticulum (ER) luminal proteins. The protein is Derlin-2.1 (DER2.1) of Arabidopsis thaliana (Mouse-ear cress).